The sequence spans 1058 residues: Carbamoyl phosphate synthase large chain (1058 aa).

Positions 1-401 (MPKRTDIQKI…SLLKACRSLE (401 aa)) are carboxyphosphate synthetic domain. ATP-binding residues include arginine 129, arginine 169, glycine 175, glycine 176, arginine 208, isoleucine 210, glutamate 215, glycine 241, isoleucine 242, histidine 243, glutamine 284, and glutamate 298. The ATP-grasp 1 domain occupies 133–327 (KQLMEELEQP…IAKLAAKIAV (195 aa)). Positions 284, 298, and 300 each coordinate Mg(2+). Residues glutamine 284, glutamate 298, and asparagine 300 each contribute to the Mn(2+) site. The segment at 402 to 546 (IGVHHNEIPE…YSTYGWENES (145 aa)) is oligomerization domain. Residues 547–929 (IKSDKESVLV…ALYKAFEASY (383 aa)) form a carbamoyl phosphate synthetic domain region. Residues 671-861 (EQALKELDIP…MAQVATKLIL (191 aa)) form the ATP-grasp 2 domain. Residues arginine 707, serine 746, isoleucine 748, glutamate 752, glycine 777, valine 778, histidine 779, serine 780, glutamine 820, and glutamate 832 each contribute to the ATP site. Mg(2+)-binding residues include glutamine 820, glutamate 832, and asparagine 834. 3 residues coordinate Mn(2+): glutamine 820, glutamate 832, and asparagine 834. The MGS-like domain occupies 930 to 1058 (LHLPTFGNVV…ESRSFVTEAI (129 aa)). The tract at residues 930–1058 (LHLPTFGNVV…ESRSFVTEAI (129 aa)) is allosteric domain.

It belongs to the CarB family. Composed of two chains; the small (or glutamine) chain promotes the hydrolysis of glutamine to ammonia, which is used by the large (or ammonia) chain to synthesize carbamoyl phosphate. Tetramer of heterodimers (alpha,beta)4. Requires Mg(2+) as cofactor. It depends on Mn(2+) as a cofactor.

It catalyses the reaction hydrogencarbonate + L-glutamine + 2 ATP + H2O = carbamoyl phosphate + L-glutamate + 2 ADP + phosphate + 2 H(+). The enzyme catalyses hydrogencarbonate + NH4(+) + 2 ATP = carbamoyl phosphate + 2 ADP + phosphate + 2 H(+). It participates in amino-acid biosynthesis; L-arginine biosynthesis; carbamoyl phosphate from bicarbonate: step 1/1. It functions in the pathway pyrimidine metabolism; UMP biosynthesis via de novo pathway; (S)-dihydroorotate from bicarbonate: step 1/3. In terms of biological role, large subunit of the glutamine-dependent carbamoyl phosphate synthetase (CPSase). CPSase catalyzes the formation of carbamoyl phosphate from the ammonia moiety of glutamine, carbonate, and phosphate donated by ATP, constituting the first step of 2 biosynthetic pathways, one leading to arginine and/or urea and the other to pyrimidine nucleotides. The large subunit (synthetase) binds the substrates ammonia (free or transferred from glutamine from the small subunit), hydrogencarbonate and ATP and carries out an ATP-coupled ligase reaction, activating hydrogencarbonate by forming carboxy phosphate which reacts with ammonia to form carbamoyl phosphate. The chain is Carbamoyl phosphate synthase large chain from Streptococcus pneumoniae (strain ATCC 700669 / Spain 23F-1).